The following is a 501-amino-acid chain: Glycerol kinase (501 aa).

Residue Thr16 participates in ADP binding. The ATP site is built by Thr16, Thr17, and Ser18. A sn-glycerol 3-phosphate-binding site is contributed by Thr16. An ADP-binding site is contributed by Arg20. Arg84, Glu85, Tyr135, and Asp242 together coordinate sn-glycerol 3-phosphate. Arg84, Glu85, Tyr135, Asp242, and Gln243 together coordinate glycerol. Thr264 and Gly307 together coordinate ADP. Residues Thr264, Gly307, Gln311, and Gly408 each contribute to the ATP site. ADP is bound at residue Gly408.

It belongs to the FGGY kinase family.

It catalyses the reaction glycerol + ATP = sn-glycerol 3-phosphate + ADP + H(+). The protein operates within polyol metabolism; glycerol degradation via glycerol kinase pathway; sn-glycerol 3-phosphate from glycerol: step 1/1. Functionally, key enzyme in the regulation of glycerol uptake and metabolism. Catalyzes the phosphorylation of glycerol to yield sn-glycerol 3-phosphate. The polypeptide is Glycerol kinase (Saccharolobus islandicus (strain M.16.27) (Sulfolobus islandicus)).